The primary structure comprises 138 residues: MRTLWIVAVWLMGVEGNLFQFGNMINHMVGKHAVWSYLSYGCYCGWGGQGKPQDATDRCCFVHDCCYGRANGCDPKLSTYSYNFQNGNIVCGNKYGCLRHICECDRVAAICFQKNMNTYNKKYKNYSSSNCQENSDKC.

The first 16 residues, 1–16, serve as a signal peptide directing secretion; it reads MRTLWIVAVWLMGVEG. 7 cysteine pairs are disulfide-bonded: C42-C131, C44-C60, C59-C111, C65-C138, C66-C104, C73-C97, and C91-C102. Ca(2+) contacts are provided by Y43, G45, and G47. H63 is an active-site residue. D64 provides a ligand contact to Ca(2+). D105 is a catalytic residue.

It belongs to the phospholipase A2 family. Group II subfamily. D49 sub-subfamily. Ca(2+) serves as cofactor. As to expression, expressed by the venom gland.

The protein resides in the secreted. The catalysed reaction is a 1,2-diacyl-sn-glycero-3-phosphocholine + H2O = a 1-acyl-sn-glycero-3-phosphocholine + a fatty acid + H(+). Functionally, snake venom phospholipase A2 (PLA2) that exhibits medium anticoagulant effects by binding to factor Xa (F10) and inhibiting the prothrombinase activity (IC(50) is 90 nM). PLA2 catalyzes the calcium-dependent hydrolysis of the 2-acyl groups in 3-sn-phosphoglycerides. In Vipera berus berus (Common viper), this protein is Basic phospholipase A2 Pla2Vb.